Consider the following 350-residue polypeptide: Magnesium-chelatase 38 kDa subunit (350 aa).

52-59 provides a ligand contact to ATP; it reads GDRGTGKS.

The protein belongs to the Mg-chelatase subunits D/I family.

The enzyme catalyses protoporphyrin IX + Mg(2+) + ATP + H2O = Mg-protoporphyrin IX + ADP + phosphate + 3 H(+). It participates in porphyrin-containing compound metabolism; bacteriochlorophyll biosynthesis. In terms of biological role, involved in bacteriochlorophyll biosynthesis; introduces a magnesium ion into protoporphyrin IX to yield Mg-protoporphyrin IX. The sequence is that of Magnesium-chelatase 38 kDa subunit (bchI) from Rhodobacter capsulatus (strain ATCC BAA-309 / NBRC 16581 / SB1003).